The following is a 440-amino-acid chain: Methylthioribose-1-phosphate isomerase (440 aa).

Asp-285 (proton donor) is an active-site residue.

This sequence belongs to the eIF-2B alpha/beta/delta subunits family. MtnA subfamily.

Its subcellular location is the cytoplasm. The protein localises to the nucleus. The enzyme catalyses 5-(methylsulfanyl)-alpha-D-ribose 1-phosphate = 5-(methylsulfanyl)-D-ribulose 1-phosphate. It functions in the pathway amino-acid biosynthesis; L-methionine biosynthesis via salvage pathway; L-methionine from S-methyl-5-thio-alpha-D-ribose 1-phosphate: step 1/6. In terms of biological role, catalyzes the interconversion of methylthioribose-1-phosphate (MTR-1-P) into methylthioribulose-1-phosphate (MTRu-1-P). This chain is Methylthioribose-1-phosphate isomerase (mri1), found in Botryotinia fuckeliana (strain B05.10) (Noble rot fungus).